A 333-amino-acid polypeptide reads, in one-letter code: Serine proteinase inhibitor 2 (333 aa).

It belongs to the serpin family. Poxviruses subfamily.

It is found in the host cytoplasm. Weak inhibitor of the interleukin-1-beta converting enzyme (ICE) and of granzyme B. Does not form a stable complex with ICE, but can for a stable complex with granzyme B. This is Serine proteinase inhibitor 2 (SERP2) from Myxoma virus (strain Uriarra) (MYXV).